A 341-amino-acid polypeptide reads, in one-letter code: Glyceraldehyde-3-phosphate dehydrogenase 3 (341 aa).

NAD(+) is bound by residues arginine 13 to isoleucine 14, aspartate 35, and arginine 85. D-glyceraldehyde 3-phosphate contacts are provided by residues serine 157–threonine 159, threonine 188, threonine 217–glycine 218, and arginine 240. The active-site Nucleophile is the cysteine 158. Residue asparagine 322 participates in NAD(+) binding.

Belongs to the glyceraldehyde-3-phosphate dehydrogenase family. As to quaternary structure, homotetramer.

The protein resides in the cytoplasm. The enzyme catalyses D-glyceraldehyde 3-phosphate + phosphate + NAD(+) = (2R)-3-phospho-glyceroyl phosphate + NADH + H(+). It participates in carbohydrate degradation; glycolysis; pyruvate from D-glyceraldehyde 3-phosphate: step 1/5. The protein is Glyceraldehyde-3-phosphate dehydrogenase 3 (gpd-3) of Caenorhabditis elegans.